The sequence spans 341 residues: Protein pelota homolog (341 aa).

Belongs to the eukaryotic release factor 1 family. Pelota subfamily. In terms of assembly, monomer. A divalent metal cation serves as cofactor.

It is found in the cytoplasm. Its function is as follows. May function in recognizing stalled ribosomes, interact with stem-loop structures in stalled mRNA molecules, and effect endonucleolytic cleavage of the mRNA. May play a role in the release non-functional ribosomes and degradation of damaged mRNAs. Has endoribonuclease activity. This is Protein pelota homolog from Methanoculleus marisnigri (strain ATCC 35101 / DSM 1498 / JR1).